A 902-amino-acid chain; its full sequence is Zinc finger CCCH-type antiviral protein 1 (902 aa).

Residue Ala-2 is modified to N-acetylalanine. The N-terminal domain stretch occupies residues Ala-2–Phe-254. Residues Arg-69–Lys-76 carry the Nuclear localization signal motif. 4 C3H1-type zinc fingers span residues Cys-73–His-86, Cys-88–His-110, Cys-150–His-172, and Ser-169–Leu-193. Residues Ser-221–Asp-251 form a disordered region. The tract at residues Met-224 to Phe-254 is binding to EXOSC5. The span at Ser-235–Ser-247 shows a compositional bias: basic residues. A phosphoserine; by GSK3-beta mark is found at Ser-257, Ser-263, Ser-267, and Ser-271. Residues Ser-265 to Gln-278 show a composition bias toward polar residues. 2 disordered regions span residues Ser-265–Asp-287 and Tyr-299–Arg-373. Position 273 is a phosphothreonine (Thr-273). A phosphoserine mark is found at Ser-275 and Ser-284. The Nuclear export signal signature appears at Leu-285 to Asp-292. 6 positions are modified to phosphoserine: Ser-302, Ser-327, Ser-335, Ser-355, Ser-378, and Ser-387. Composition is skewed to polar residues over residues Ser-310 to Gln-336 and Pro-344 to Gln-369. A Phosphothreonine modification is found at Thr-393. 4 positions are modified to phosphoserine: Ser-407, Ser-469, Ser-492, and Ser-494. The tract at residues Leu-445–Asp-481 is disordered. Thr-554 is modified (phosphothreonine). Tyr-572 and Ser-590 each carry phosphoserine. A WWE domain is found at Ser-594–Arg-681. The 187-residue stretch at Pro-716–Ser-902 folds into the PARP catalytic domain.

It belongs to the ARTD/PARP family. As to quaternary structure, homodimer or homooligomer. Homooligomerization is essential for its antiviral activity. Interacts with EXOSC5. Interacts (via N-terminal domain) with DDX17 in an RNA-independent manner. Interacts with EXOSC3, EXOSC7, DCP2 and DCP1A. Interacts with PARN in an RNA-independent manner. Interacts with XRN1 in an RNA-dependent manner. Isoform 2 interacts (via zinc-fingers) with RIGI in an RNA-dependent manner. Interacts (via N-terminal domain) with DHX30 (via N-terminus) in an RNA-independent manner. Post-translationally, phosphorylation at Ser-275 is essential for sequential phosphorylation of Ser-271, Ser-267, Ser-263 and Ser-257 by GSK3-beta. Phosphorylation by GSK3-beta enhances its antiviral activity.

Its subcellular location is the cytoplasm. It is found in the nucleus. Its function is as follows. Antiviral protein which inhibits the replication of viruses by recruiting the cellular RNA degradation machineries to degrade the viral mRNAs. Binds to a ZAP-responsive element (ZRE) present in the target viral mRNA, recruits cellular poly(A)-specific ribonuclease PARN to remove the poly(A) tail, and the 3'-5' exoribonuclease complex exosome to degrade the RNA body from the 3'-end. It also recruits the decapping complex DCP1-DCP2 through RNA helicase p72 (DDX17) to remove the cap structure of the viral mRNA to initiate its degradation from the 5'-end. Its target viruses belong to families which include retroviridae: human immunodeficiency virus type 1 (HIV-1), moloney and murine leukemia virus (MoMLV) and xenotropic MuLV-related virus (XMRV), filoviridae: ebola virus (EBOV) and marburg virus (MARV), togaviridae: sindbis virus (SINV) and Ross river virus (RRV). Specifically targets the multiply spliced but not unspliced or singly spliced HIV-1 mRNAs for degradation. Isoform 1 is a more potent viral inhibitor than isoform 2. Isoform 2 acts as a positive regulator of RIGI signaling resulting in activation of the downstream effector IRF3 leading to the expression of type I IFNs and IFN stimulated genes (ISGs). The protein is Zinc finger CCCH-type antiviral protein 1 of Homo sapiens (Human).